The chain runs to 519 residues: Iroquois-class homeodomain protein IRX-4 (519 aa).

Positions 143 to 204 (GTRRKNATRE…NARRRLKKEN (62 aa)) form a DNA-binding region, homeobox; TALE-type. The segment at 204 to 298 (NKMTWPPRNK…VPAAPDGPVK (95 aa)) is disordered. The span at 213–222 (KCADEKRPYA) shows a compositional bias: basic and acidic residues. 2 stretches are compositionally biased toward acidic residues: residues 223 to 235 (EGEEEEGGEEEAR) and 257 to 267 (LSDLDDFDPLE).

It belongs to the TALE/IRO homeobox family. Interacts with the vitamin D receptor VDR but doesn't affect its transactivation activity. As to expression, predominantly expressed in cardiac ventricles.

The protein resides in the nucleus. Functionally, likely to be an important mediator of ventricular differentiation during cardiac development. This chain is Iroquois-class homeodomain protein IRX-4 (IRX4), found in Homo sapiens (Human).